The sequence spans 102 residues: Protamine-2 (102 aa).

The tract at residues 1–102 is disordered; sequence MVRYRVRSPS…RTRRRTCRKH (102 aa). Phosphoserine occurs at positions 8, 10, and 37. The span at 39 to 48 shows a compositional bias: basic and acidic residues; that stretch reads EHVEVYERTH. Basic residues predominate over residues 49–102; it reads GHSHYRRRHCSRRRLRRIHRQQHRSCRRRKRRSCRHRRRHRRGCRTRRRTCRKH.

This sequence belongs to the protamine P2 family. Interacts with TDRP. In terms of processing, proteolytic processing into mature chains is required for histone eviction during spermatogenesis. Transition proteins (TNP1 and TNP2) are required for processing. Testis.

Its subcellular location is the nucleus. The protein localises to the chromosome. In terms of biological role, protamines substitute for histones in the chromatin of sperm during the haploid phase of spermatogenesis. They compact sperm DNA into a highly condensed, stable and inactive complex. This is Protamine-2 (PRM2) from Pan paniscus (Pygmy chimpanzee).